Reading from the N-terminus, the 418-residue chain is Tyrosine--tRNA ligase (418 aa).

Position 34 (Y34) interacts with L-tyrosine. The 'HIGH' region signature appears at 39–48 (PTGDSMHIGH). L-tyrosine-binding residues include Y166 and Q170. A 'KMSKS' region motif is present at residues 228 to 232 (KFGKT). K231 is an ATP binding site. Positions 350 to 417 (TNIVELLTET…KKNYFLAKVK (68 aa)) constitute an S4 RNA-binding domain.

Belongs to the class-I aminoacyl-tRNA synthetase family. TyrS type 1 subfamily. In terms of assembly, homodimer.

It localises to the cytoplasm. The enzyme catalyses tRNA(Tyr) + L-tyrosine + ATP = L-tyrosyl-tRNA(Tyr) + AMP + diphosphate + H(+). Catalyzes the attachment of tyrosine to tRNA(Tyr) in a two-step reaction: tyrosine is first activated by ATP to form Tyr-AMP and then transferred to the acceptor end of tRNA(Tyr). This chain is Tyrosine--tRNA ligase, found in Levilactobacillus brevis (Lactobacillus brevis).